We begin with the raw amino-acid sequence, 338 residues long: MSTLRLLLSDSYDPWFNLAVEECIFRQMPATQRVLFLWRNADTVVIGRAQNPWKECNTRRMEEDHVRLARRSSGGGAVFHDLGNTCFTFMAGKPEYDKTVSTAIVLAALNSLGVTAEASGRNDLVVKTDSGDRKVSGSAYRETMDRGFHHGTLLLNADLSRLANYLNPDQKKLQAKGITSVRGRVANLVELLPGITHQQVCEAIQEAFFSHYGERVDAEVISPDNTPDLPNFAETFARQSSWEWNFGQAPAFSHLLDERFRWGGVELHFDVEKGHITRAQAFTDSLNPAPLEALAARLVGCQYRAEVLQQQCEALVGDFPEQEAELKELSAWIAGAVR.

The BPL/LPL catalytic domain occupies 29-216 (PATQRVLFLW…AFFSHYGERV (188 aa)). ATP is bound by residues Arg-71, 76–79 (GAVF), and Lys-134. Lys-134 is a binding site for (R)-lipoate.

The protein belongs to the LplA family. As to quaternary structure, monomer.

The protein localises to the cytoplasm. It carries out the reaction L-lysyl-[lipoyl-carrier protein] + (R)-lipoate + ATP = N(6)-[(R)-lipoyl]-L-lysyl-[lipoyl-carrier protein] + AMP + diphosphate + H(+). It functions in the pathway protein modification; protein lipoylation via exogenous pathway; protein N(6)-(lipoyl)lysine from lipoate: step 1/2. It participates in protein modification; protein lipoylation via exogenous pathway; protein N(6)-(lipoyl)lysine from lipoate: step 2/2. Catalyzes both the ATP-dependent activation of exogenously supplied lipoate to lipoyl-AMP and the transfer of the activated lipoyl onto the lipoyl domains of lipoate-dependent enzymes. In Klebsiella pneumoniae subsp. pneumoniae (strain ATCC 700721 / MGH 78578), this protein is Lipoate-protein ligase A.